We begin with the raw amino-acid sequence, 112 residues long: UPF0342 protein SGO_1370 (112 aa).

It belongs to the UPF0342 family.

The polypeptide is UPF0342 protein SGO_1370 (Streptococcus gordonii (strain Challis / ATCC 35105 / BCRC 15272 / CH1 / DL1 / V288)).